A 240-amino-acid chain; its full sequence is Probable septum site-determining protein MinC (240 aa).

The protein belongs to the MinC family. As to quaternary structure, interacts with MinD and FtsZ.

Its function is as follows. Cell division inhibitor that blocks the formation of polar Z ring septums. Rapidly oscillates between the poles of the cell to destabilize FtsZ filaments that have formed before they mature into polar Z rings. Prevents FtsZ polymerization. This Acinetobacter baumannii (strain ATCC 17978 / DSM 105126 / CIP 53.77 / LMG 1025 / NCDC KC755 / 5377) protein is Probable septum site-determining protein MinC.